The chain runs to 172 residues: ATP synthase subunit b (172 aa).

Residues 11–30 traverse the membrane as a helical segment; it reads LIAQIINFVIVLWVLNRFAF.

It belongs to the ATPase B chain family. F-type ATPases have 2 components, F(1) - the catalytic core - and F(0) - the membrane proton channel. F(1) has five subunits: alpha(3), beta(3), gamma(1), delta(1), epsilon(1). F(0) has three main subunits: a(1), b(2) and c(10-14). The alpha and beta chains form an alternating ring which encloses part of the gamma chain. F(1) is attached to F(0) by a central stalk formed by the gamma and epsilon chains, while a peripheral stalk is formed by the delta and b chains.

It localises to the cell inner membrane. Its function is as follows. F(1)F(0) ATP synthase produces ATP from ADP in the presence of a proton or sodium gradient. F-type ATPases consist of two structural domains, F(1) containing the extramembraneous catalytic core and F(0) containing the membrane proton channel, linked together by a central stalk and a peripheral stalk. During catalysis, ATP synthesis in the catalytic domain of F(1) is coupled via a rotary mechanism of the central stalk subunits to proton translocation. In terms of biological role, component of the F(0) channel, it forms part of the peripheral stalk, linking F(1) to F(0). In Methylacidiphilum infernorum (isolate V4) (Methylokorus infernorum (strain V4)), this protein is ATP synthase subunit b.